Reading from the N-terminus, the 98-residue chain is NADH-ubiquinone oxidoreductase chain 4L (98 aa).

Helical transmembrane passes span 1–21 (MTTIYLNLILAFTLALSGVLI), 26–46 (LLSTLLCLEGMMLSLFILMAL), and 59–79 (APLILLVFSACEAGVGLALLV).

Belongs to the complex I subunit 4L family. As to quaternary structure, core subunit of respiratory chain NADH dehydrogenase (Complex I) which is composed of 45 different subunits.

It localises to the mitochondrion inner membrane. The enzyme catalyses a ubiquinone + NADH + 5 H(+)(in) = a ubiquinol + NAD(+) + 4 H(+)(out). Core subunit of the mitochondrial membrane respiratory chain NADH dehydrogenase (Complex I) which catalyzes electron transfer from NADH through the respiratory chain, using ubiquinone as an electron acceptor. Part of the enzyme membrane arm which is embedded in the lipid bilayer and involved in proton translocation. The polypeptide is NADH-ubiquinone oxidoreductase chain 4L (MT-ND4L) (Rhyncholestes raphanurus (Chilean shrew opossum)).